Consider the following 377-residue polypeptide: RIB43A-like with coiled-coils protein 2 (377 aa).

Residues 217–246 adopt a coiled-coil conformation; sequence NKNQVVELTERKRQEKQQEQEDNMTEITNL. Residues 354 to 377 form a disordered region; that stretch reads KQMNTASSSQPTEDYFSQFNTRSR.

Belongs to the RIB43A family. In terms of assembly, microtubule inner protein component of sperm flagellar doublet microtubules.

It is found in the cytoplasm. It localises to the cytoskeleton. The protein localises to the cilium axoneme. The protein resides in the flagellum axoneme. Its function is as follows. Microtubule inner protein (MIP) part of the dynein-decorated doublet microtubules (DMTs) in cilia axoneme, which is required for motile cilia beating. In Mus musculus (Mouse), this protein is RIB43A-like with coiled-coils protein 2.